We begin with the raw amino-acid sequence, 599 residues long: Sulfite reductase [NADPH] flavoprotein alpha-component (599 aa).

In terms of domain architecture, Flavodoxin-like spans 64–202 (ITIISASQTG…AASEWRARVV (139 aa)). Residues 70–75 (SQTGNA), 117–120 (STQG), and 153–162 (LGDSSYEFFC) contribute to the FMN site. In terms of domain architecture, FAD-binding FR-type spans 234-448 (DAPLVASLSV…IEHNDNFRLP (215 aa)). FAD-binding positions include Thr-322, Ala-356, 386–389 (RLYS), 404–406 (TVG), Tyr-410, and 419–422 (GGAS). Residues 519 to 520 (SR), 525 to 529 (KVYVQ), and Asp-561 contribute to the NADP(+) site. Tyr-599 is a binding site for FAD.

It belongs to the NADPH-dependent sulphite reductase flavoprotein subunit CysJ family. In the N-terminal section; belongs to the flavodoxin family. This sequence in the C-terminal section; belongs to the flavoprotein pyridine nucleotide cytochrome reductase family. Alpha(8)-beta(8). The alpha component is a flavoprotein, the beta component is a hemoprotein. The cofactor is FAD. Requires FMN as cofactor.

The enzyme catalyses hydrogen sulfide + 3 NADP(+) + 3 H2O = sulfite + 3 NADPH + 4 H(+). The protein operates within sulfur metabolism; hydrogen sulfide biosynthesis; hydrogen sulfide from sulfite (NADPH route): step 1/1. Component of the sulfite reductase complex that catalyzes the 6-electron reduction of sulfite to sulfide. This is one of several activities required for the biosynthesis of L-cysteine from sulfate. The flavoprotein component catalyzes the electron flow from NADPH -&gt; FAD -&gt; FMN to the hemoprotein component. In Escherichia coli (strain ATCC 8739 / DSM 1576 / NBRC 3972 / NCIMB 8545 / WDCM 00012 / Crooks), this protein is Sulfite reductase [NADPH] flavoprotein alpha-component.